A 100-amino-acid polypeptide reads, in one-letter code: Urease subunit gamma (100 aa).

It belongs to the urease gamma subunit family. In terms of assembly, heterotrimer of UreA (gamma), UreB (beta) and UreC (alpha) subunits. Three heterotrimers associate to form the active enzyme.

It localises to the cytoplasm. The enzyme catalyses urea + 2 H2O + H(+) = hydrogencarbonate + 2 NH4(+). It participates in nitrogen metabolism; urea degradation; CO(2) and NH(3) from urea (urease route): step 1/1. The chain is Urease subunit gamma from Staphylococcus xylosus.